A 289-amino-acid polypeptide reads, in one-letter code: D-psicose 3-epimerase (289 aa).

Tyr6 and Ala107 together coordinate substrate. Residue Glu150 is the Proton donor/acceptor of the active site. Position 150 (Glu150) interacts with Mn(2+). Substrate contacts are provided by residues Glu156 and 183 to 186 (DTFH). Asp183 and His209 together coordinate Mn(2+). Arg215 contributes to the substrate binding site. Glu244 serves as the catalytic Proton donor/acceptor. Residue Glu244 participates in Mn(2+) binding.

This sequence belongs to the hyi family. In terms of assembly, homotetramer. Mn(2+) is required as a cofactor. The cofactor is Co(2+).

It carries out the reaction D-allulose = keto-D-fructose. With respect to regulation, inhibited by Zn(2+) and Cu(2+). In terms of biological role, involved in the biosynthesis of D-psicose. Catalyzes the reversible epimerization of D-fructose at the C3 position to yield D-psicose. The enzyme is highly specific for D-psicose and shows very low activity with D-tagatose. The substrate specificity decreases in the following order: D-fructose, D-tagatose, D-ribulose, D-xylulose, and D-sorbose. It shows a higher level of activity for cis ketoses than for trans-ketoses. This Agrobacterium fabrum (strain C58 / ATCC 33970) (Agrobacterium tumefaciens (strain C58)) protein is D-psicose 3-epimerase (dpe).